Reading from the N-terminus, the 205-residue chain is ATP phosphoribosyltransferase (205 aa).

It belongs to the ATP phosphoribosyltransferase family. Short subfamily. Heteromultimer composed of HisG and HisZ subunits.

Its subcellular location is the cytoplasm. The catalysed reaction is 1-(5-phospho-beta-D-ribosyl)-ATP + diphosphate = 5-phospho-alpha-D-ribose 1-diphosphate + ATP. It participates in amino-acid biosynthesis; L-histidine biosynthesis; L-histidine from 5-phospho-alpha-D-ribose 1-diphosphate: step 1/9. Catalyzes the condensation of ATP and 5-phosphoribose 1-diphosphate to form N'-(5'-phosphoribosyl)-ATP (PR-ATP). Has a crucial role in the pathway because the rate of histidine biosynthesis seems to be controlled primarily by regulation of HisG enzymatic activity. This chain is ATP phosphoribosyltransferase, found in Staphylococcus saprophyticus subsp. saprophyticus (strain ATCC 15305 / DSM 20229 / NCIMB 8711 / NCTC 7292 / S-41).